We begin with the raw amino-acid sequence, 616 residues long: Adenylosuccinate synthetase 1 (616 aa).

The disordered stretch occupies residues 1 to 27; sequence MDKQAERGQSAGPVKTPQGTQPPAHNY. A compositionally biased stretch (polar residues) spans 17–27; the sequence is PQGTQPPAHNY. GTP is bound by residues 87–93 and 117–119; these read GDEGKGK and GHT. The Proton acceptor role is filled by D88. Mg(2+) contacts are provided by D88 and G117. IMP contacts are provided by residues 88 to 91, 115 to 118, T202, K216, Q328, T343, and K472; these read DEGK and NAGH. H118 functions as the Proton donor in the catalytic mechanism. 468–474 provides a ligand contact to substrate; sequence AVTKKPR. Residues R474 and 603–605 each bind GTP; that span reads GNG.

It belongs to the adenylosuccinate synthetase family. As to quaternary structure, homodimer. Mg(2+) serves as cofactor.

It localises to the cytoplasm. The enzyme catalyses IMP + L-aspartate + GTP = N(6)-(1,2-dicarboxyethyl)-AMP + GDP + phosphate + 2 H(+). It functions in the pathway purine metabolism; AMP biosynthesis via de novo pathway; AMP from IMP: step 1/2. Functionally, plays an important role in the salvage pathway for purine nucleotide biosynthesis. Catalyzes the first committed step in the biosynthesis of AMP from IMP. This chain is Adenylosuccinate synthetase 1, found in Trypanosoma cruzi (strain CL Brener).